Here is a 551-residue protein sequence, read N- to C-terminus: Lysine--tRNA ligase (551 aa).

The 'HIGH' region motif lies at 54–62 (PSGLPHIGT). The 'KMSKS' region signature appears at 303 to 307 (KISKS). Lys-306 contributes to the ATP binding site.

Belongs to the class-I aminoacyl-tRNA synthetase family.

It is found in the cytoplasm. It carries out the reaction tRNA(Lys) + L-lysine + ATP = L-lysyl-tRNA(Lys) + AMP + diphosphate. The polypeptide is Lysine--tRNA ligase (Brucella melitensis biotype 1 (strain ATCC 23456 / CCUG 17765 / NCTC 10094 / 16M)).